A 79-amino-acid chain; its full sequence is Sulfur carrier protein TusA (79 aa).

Cys17 acts as the Cysteine persulfide intermediate in catalysis.

Belongs to the sulfur carrier protein TusA family.

Its subcellular location is the cytoplasm. In terms of biological role, sulfur carrier protein which probably makes part of a sulfur-relay system. The polypeptide is Sulfur carrier protein TusA (Idiomarina loihiensis (strain ATCC BAA-735 / DSM 15497 / L2-TR)).